Reading from the N-terminus, the 269-residue chain is Lck-interacting transmembrane adapter 1 (269 aa).

Residues methionine 1 to serine 7 are Extracellular-facing. Residues alanine 8–cysteine 28 form a helical; Signal-anchor for type III membrane protein membrane-spanning segment. S-palmitoyl cysteine attachment occurs at residues cysteine 28 and cysteine 31. Topologically, residues threonine 29–leucine 269 are cytoplasmic. The segment at serine 102–serine 133 is disordered. Pro residues predominate over residues arginine 115 to alanine 124. Tyrosine 137, tyrosine 175, and tyrosine 207 each carry phosphotyrosine. The interval tyrosine 137–valine 140 is interaction with GRB2. 2 interaction with CSK regions span residues tyrosine 175–isoleucine 178 and tyrosine 207–valine 210. 2 positions are modified to phosphotyrosine; by LYN or LCK: tyrosine 242 and tyrosine 261. The interaction with LCK and PIK3R1 stretch occupies residues tyrosine 242–isoleucine 245. The tract at residues tyrosine 261–isoleucine 264 is interaction with LCK, PLCG2 and PIK3R1. Phosphoserine is present on serine 263.

As to quaternary structure, when phosphorylated in response to TCR stimulation and/or CD4 costimulation, interacts with LCK, CSK, FYN, PTPN11/SHP2, GRB2, PIK3R1 and GRAP2. When phosphorylated in response to BCR activation, interacts with LYN, PIK3R1, PLCG2 and GRB2. In terms of processing, palmitoylation of Cys-28 and Cys-31 is required for raft targeting. Phosphorylated on tyrosines upon TCR activation and/or CD4 coreceptor stimulation, or upon BCR stimulation; which leads to the recruitment of SH2-containing proteins. In terms of tissue distribution, expressed in spleen and lung. Present in primary B-cells and peripheral T-cells (at protein level).

The protein resides in the cell membrane. In terms of biological role, involved in BCR (B-cell antigen receptor)-mediated signaling in B-cells and TCR (T-cell antigen receptor)-mediated T-cell signaling in T-cells. In absence of TCR signaling, may be involved in CD4-mediated inhibition of T-cell activation. Couples activation of these receptors and their associated kinases with distal intracellular events such as calcium mobilization or MAPK activation through the recruitment of PLCG2, GRB2, GRAP2, and other signaling molecules. The sequence is that of Lck-interacting transmembrane adapter 1 (Lime1) from Mus musculus (Mouse).